Reading from the N-terminus, the 365-residue chain is Ribosomal RNA large subunit methyltransferase M (365 aa).

S-adenosyl-L-methionine contacts are provided by residues serine 187, 220–223 (CPGG), aspartate 239, aspartate 259, and aspartate 276. The Proton acceptor role is filled by lysine 305.

It belongs to the class I-like SAM-binding methyltransferase superfamily. RNA methyltransferase RlmE family. RlmM subfamily. In terms of assembly, monomer.

Its subcellular location is the cytoplasm. It catalyses the reaction cytidine(2498) in 23S rRNA + S-adenosyl-L-methionine = 2'-O-methylcytidine(2498) in 23S rRNA + S-adenosyl-L-homocysteine + H(+). In terms of biological role, catalyzes the 2'-O-methylation at nucleotide C2498 in 23S rRNA. This Psychromonas ingrahamii (strain DSM 17664 / CCUG 51855 / 37) protein is Ribosomal RNA large subunit methyltransferase M.